The sequence spans 251 residues: Triosephosphate isomerase (251 aa).

9 to 11 is a substrate binding site; that stretch reads NWK. H94 acts as the Electrophile in catalysis. E166 acts as the Proton acceptor in catalysis. Substrate is bound by residues G172, S211, and 232-233; that span reads GG.

It belongs to the triosephosphate isomerase family. Homodimer.

It localises to the cytoplasm. The enzyme catalyses D-glyceraldehyde 3-phosphate = dihydroxyacetone phosphate. The protein operates within carbohydrate biosynthesis; gluconeogenesis. It participates in carbohydrate degradation; glycolysis; D-glyceraldehyde 3-phosphate from glycerone phosphate: step 1/1. Involved in the gluconeogenesis. Catalyzes stereospecifically the conversion of dihydroxyacetone phosphate (DHAP) to D-glyceraldehyde-3-phosphate (G3P). This Xanthomonas euvesicatoria pv. vesicatoria (strain 85-10) (Xanthomonas campestris pv. vesicatoria) protein is Triosephosphate isomerase.